Here is a 55-residue protein sequence, read N- to C-terminus: MAKAANIKIKLLSTADTGFFYVTSKNSRTKTDKLSFRKYDPVAKKHVEFKETKIK.

Belongs to the bacterial ribosomal protein bL33 family.

This chain is Large ribosomal subunit protein bL33, found in Mesorhizobium japonicum (strain LMG 29417 / CECT 9101 / MAFF 303099) (Mesorhizobium loti (strain MAFF 303099)).